We begin with the raw amino-acid sequence, 567 residues long: Phosphoglucomutase-like protein 5 (567 aa).

Residues 1 to 26 form a disordered region; that stretch reads MEGSPIPVLTVPTAPYEDQRPTGGGG. Residue Thr-120 is modified to Phosphothreonine. Ser-122 bears the Phosphoserine mark.

Belongs to the phosphohexose mutase family. As to quaternary structure, interacts with DMD/dystrophin; the interaction is direct. Interacts with UTRN/utrophin.

The protein resides in the cell junction. It is found in the adherens junction. The protein localises to the cytoplasm. Its subcellular location is the cytoskeleton. It localises to the cell membrane. The protein resides in the sarcolemma. Functionally, component of adherens-type cell-cell and cell-matrix junctions. Has no phosphoglucomutase activity in vitro. The sequence is that of Phosphoglucomutase-like protein 5 from Rattus norvegicus (Rat).